We begin with the raw amino-acid sequence, 737 residues long: Polyribonucleotide nucleotidyltransferase (737 aa).

Residues aspartate 489 and aspartate 495 each contribute to the Mg(2+) site. The 60-residue stretch at 556–615 (PKIDTIKIDVDKIKIVIGKGGETIDKIIAETGVKIDIDEEGNVSIYSSDQDAINRAKEII) folds into the KH domain. One can recognise an S1 motif domain in the interval 625–693 (DEVYRAKVVR…EKGRVDASMK (69 aa)). The tract at residues 691 to 737 (SMKALLPRPPKPERDEKGEKSERPYRPRHHKDHKPKKEITETPKDSE) is disordered. Basic and acidic residues-rich tracts occupy residues 700-715 (PKPE…ERPY) and 725-737 (PKKE…KDSE).

The protein belongs to the polyribonucleotide nucleotidyltransferase family. It depends on Mg(2+) as a cofactor.

The protein localises to the cytoplasm. It carries out the reaction RNA(n+1) + phosphate = RNA(n) + a ribonucleoside 5'-diphosphate. In terms of biological role, involved in mRNA degradation. Catalyzes the phosphorolysis of single-stranded polyribonucleotides processively in the 3'- to 5'-direction. This Streptococcus pneumoniae (strain Hungary19A-6) protein is Polyribonucleotide nucleotidyltransferase.